The following is a 369-amino-acid chain: F-box protein At3g08750 (369 aa).

In terms of domain architecture, F-box spans 6–53; that stretch reads CLLLPSLPFELIEEILYKIPAESLIRFKSTCKKWYNLITEKRFMYNHL.

This Arabidopsis thaliana (Mouse-ear cress) protein is F-box protein At3g08750.